The chain runs to 451 residues: MDGVSQRVDQRPNRIAVLSVHTSPLAQPGTGDAGGMNVYVLRTAVELAQRGIEVEIFTRATASHIPPVQEAAPGVLVRNVVAGPFEGLDKQDLPTQLCPFTAEVLRQEARQLPGYYDLVHSHYWLSGQVGWLTRDRWRVPLVHTAHTLAAVKNAALAEGDAPEPVSREIGEKQIIAEADRMVANTAEEARQLVELYGADRDRIDVVPPGADLTRYRPGDRAAARAELGLAPGEPIVAFVGRIQPLKAPDVLVRAAAELLRRDPGRALRVLIVGGPSGSGLQRPDALIELAAELGISERVTFLPPQPPERLVQVYRAADLVAVPSYSESFGLVAIEAQASGTPVLAADVGGLSTAVRDGATGLLVRGHETADWADALGALLGDRDRLRRMGLRAVAHAAGFSWAHTAEGLLESYSAALWEFHGARAGVGAGRMTPNQARSRALWRRRMGVRR.

Position 21 (His21) interacts with 1D-myo-inositol 3-phosphate. Residues Gln27 to Pro28 and Gly35 each bind UDP-N-acetyl-alpha-D-glucosamine. Residues Asp32–Asn37, Lys90, Tyr123, Thr147, and Arg167 contribute to the 1D-myo-inositol 3-phosphate site. UDP-N-acetyl-alpha-D-glucosamine contacts are provided by Arg241, Lys246, and Gln305. The Mg(2+) site is built by Tyr314, Arg315, and Ala317. The UDP-N-acetyl-alpha-D-glucosamine site is built by Glu327 and Glu335. Thr341 is a binding site for Mg(2+).

It belongs to the glycosyltransferase group 1 family. MshA subfamily. In terms of assembly, homodimer.

It catalyses the reaction 1D-myo-inositol 3-phosphate + UDP-N-acetyl-alpha-D-glucosamine = 1D-myo-inositol 2-acetamido-2-deoxy-alpha-D-glucopyranoside 3-phosphate + UDP + H(+). Its function is as follows. Catalyzes the transfer of a N-acetyl-glucosamine moiety to 1D-myo-inositol 3-phosphate to produce 1D-myo-inositol 2-acetamido-2-deoxy-glucopyranoside 3-phosphate in the mycothiol biosynthesis pathway. This Nocardia farcinica (strain IFM 10152) protein is D-inositol 3-phosphate glycosyltransferase.